Here is a 195-residue protein sequence, read N- to C-terminus: Holliday junction branch migration complex subunit RuvA (195 aa).

The domain I stretch occupies residues 1 to 61 (MYEYFEGIIS…DTGITLYGFQ (61 aa)). A domain II region spans residues 62–140 (DQDDKGLFLK…DYVARLDKPE (79 aa)). Residues 141-146 (NGEEIS) form a flexible linker region. Residues 146-195 (SPALNDALLALIALGYTQKEVDRITPKLVEIEADTADQYIKKGLALLLKK) form a domain III region.

It belongs to the RuvA family. In terms of assembly, homotetramer. Forms an RuvA(8)-RuvB(12)-Holliday junction (HJ) complex. HJ DNA is sandwiched between 2 RuvA tetramers; dsDNA enters through RuvA and exits via RuvB. An RuvB hexamer assembles on each DNA strand where it exits the tetramer. Each RuvB hexamer is contacted by two RuvA subunits (via domain III) on 2 adjacent RuvB subunits; this complex drives branch migration. In the full resolvosome a probable DNA-RuvA(4)-RuvB(12)-RuvC(2) complex forms which resolves the HJ.

The protein resides in the cytoplasm. The RuvA-RuvB-RuvC complex processes Holliday junction (HJ) DNA during genetic recombination and DNA repair, while the RuvA-RuvB complex plays an important role in the rescue of blocked DNA replication forks via replication fork reversal (RFR). RuvA specifically binds to HJ cruciform DNA, conferring on it an open structure. The RuvB hexamer acts as an ATP-dependent pump, pulling dsDNA into and through the RuvAB complex. HJ branch migration allows RuvC to scan DNA until it finds its consensus sequence, where it cleaves and resolves the cruciform DNA. This chain is Holliday junction branch migration complex subunit RuvA, found in Lactobacillus acidophilus (strain ATCC 700396 / NCK56 / N2 / NCFM).